Consider the following 369-residue polypeptide: Phenylalanine--tRNA ligase alpha subunit (369 aa).

A Mg(2+)-binding site is contributed by glutamate 269.

Belongs to the class-II aminoacyl-tRNA synthetase family. Phe-tRNA synthetase alpha subunit type 1 subfamily. In terms of assembly, tetramer of two alpha and two beta subunits. Mg(2+) serves as cofactor.

It is found in the cytoplasm. It carries out the reaction tRNA(Phe) + L-phenylalanine + ATP = L-phenylalanyl-tRNA(Phe) + AMP + diphosphate + H(+). The chain is Phenylalanine--tRNA ligase alpha subunit from Brucella abortus (strain 2308).